A 175-amino-acid chain; its full sequence is Protein-export protein SecB (175 aa).

Over residues 153-163 (QQQPDAANGND) the composition is skewed to polar residues. Residues 153–175 (QQQPDAANGNDSGIILPPGATRQ) are disordered.

This sequence belongs to the SecB family. In terms of assembly, homotetramer, a dimer of dimers. One homotetramer interacts with 1 SecA dimer.

The protein resides in the cytoplasm. Its function is as follows. One of the proteins required for the normal export of preproteins out of the cell cytoplasm. It is a molecular chaperone that binds to a subset of precursor proteins, maintaining them in a translocation-competent state. It also specifically binds to its receptor SecA. The protein is Protein-export protein SecB of Bordetella bronchiseptica (strain ATCC BAA-588 / NCTC 13252 / RB50) (Alcaligenes bronchisepticus).